The chain runs to 586 residues: Probable transporter AQR1 (586 aa).

2 disordered regions span residues methionine 1 to alanine 44 and glutamate 61 to glutamine 82. Topologically, residues methionine 1 to lysine 99 are extracellular. The span at asparagine 19–asparagine 40 shows a compositional bias: basic and acidic residues. The helical transmembrane segment at tryptophan 100–tyrosine 120 threads the bilayer. The Cytoplasmic segment spans residues tyrosine 121 to asparagine 139. Residues valine 140–alanine 160 traverse the membrane as a helical segment. Over aspartate 161 to arginine 166 the chain is Extracellular. The chain crosses the membrane as a helical span at residues proline 167 to proline 187. Position 188 (serine 188) is a topological domain, cytoplasmic. A helical membrane pass occupies residues tyrosine 189–isoleucine 209. Residues serine 210–threonine 225 lie on the Extracellular side of the membrane. Residues phenylalanine 226–alanine 246 form a helical membrane-spanning segment. Topologically, residues valine 247–arginine 255 are cytoplasmic. The chain crosses the membrane as a helical span at residues alanine 256 to leucine 276. At proline 277–lysine 334 the chain is on the extracellular side. A helical membrane pass occupies residues isoleucine 335–tryptophan 355. The Cytoplasmic segment spans residues threonine 356–histidine 374. A helical membrane pass occupies residues leucine 375–phenylalanine 395. At threonine 396–leucine 433 the chain is on the extracellular side. The chain crosses the membrane as a helical span at residues valine 434 to isoleucine 454. Residues aspartate 455–arginine 459 are Cytoplasmic-facing. A helical transmembrane segment spans residues isoleucine 460–threonine 480. The Extracellular portion of the chain corresponds to serine 481–threonine 523. The chain crosses the membrane as a helical span at residues valine 524–isoleucine 544. Residues proline 545–asparagine 586 lie on the Cytoplasmic side of the membrane.

This sequence belongs to the major facilitator superfamily. CAR1 family.

It is found in the membrane. In terms of biological role, probable transporter that confers resistance to short-chain monocarboxylic acids and quinidine. This chain is Probable transporter AQR1 (AQR1), found in Saccharomyces cerevisiae (strain ATCC 204508 / S288c) (Baker's yeast).